The sequence spans 395 residues: Chorismate synthase (395 aa).

Positions 40 and 46 each coordinate NADP(+). Residues 99–120 (PREGRNAPLSRPRPGHADLTGM) are disordered. Residues 134 to 136 (RSS), 256 to 257 (QA), G301, 316 to 320 (KPIPS), and R342 each bind FMN.

The protein belongs to the chorismate synthase family. In terms of assembly, homotetramer. It depends on FMNH2 as a cofactor.

It catalyses the reaction 5-O-(1-carboxyvinyl)-3-phosphoshikimate = chorismate + phosphate. It functions in the pathway metabolic intermediate biosynthesis; chorismate biosynthesis; chorismate from D-erythrose 4-phosphate and phosphoenolpyruvate: step 7/7. In terms of biological role, catalyzes the anti-1,4-elimination of the C-3 phosphate and the C-6 proR hydrogen from 5-enolpyruvylshikimate-3-phosphate (EPSP) to yield chorismate, which is the branch point compound that serves as the starting substrate for the three terminal pathways of aromatic amino acid biosynthesis. This reaction introduces a second double bond into the aromatic ring system. The chain is Chorismate synthase from Bifidobacterium longum (strain DJO10A).